We begin with the raw amino-acid sequence, 250 residues long: Insertion sequence IS232 putative ATP-binding protein (250 aa).

Residue 108 to 115 (GPSGVGKT) participates in ATP binding.

This sequence belongs to the IS21/IS1162 putative ATP-binding protein family.

The sequence is that of Insertion sequence IS232 putative ATP-binding protein from Bacillus thuringiensis subsp. berliner.